The sequence spans 182 residues: Gremlin-1 (182 aa).

The first 24 residues, Met-1–Gly-24, serve as a signal peptide directing secretion. The segment at Glu-23–Ala-65 is disordered. N-linked (GlcNAc...) asparagine glycosylation is present at Asn-44. 4 cysteine pairs are disulfide-bonded: Cys-92/Cys-142, Cys-106/Cys-156, Cys-116/Cys-174, and Cys-120/Cys-176. In terms of domain architecture, CTCK spans Cys-92–Asp-182.

Belongs to the DAN family.

The protein localises to the secreted. Cytokine that has an axial patterning activity. Acts like BMP antagonist in embryonic explants. Blocks the BMP2 activity. The chain is Gremlin-1 (grem1) from Xenopus laevis (African clawed frog).